Here is a 362-residue protein sequence, read N- to C-terminus: Chorismate synthase (362 aa).

An NADP(+)-binding site is contributed by arginine 47. Residues 124–126 (RSS), glycine 286, 301–305 (KPTAT), and arginine 327 contribute to the FMN site.

This sequence belongs to the chorismate synthase family. In terms of assembly, homotetramer. FMNH2 serves as cofactor.

The enzyme catalyses 5-O-(1-carboxyvinyl)-3-phosphoshikimate = chorismate + phosphate. It participates in metabolic intermediate biosynthesis; chorismate biosynthesis; chorismate from D-erythrose 4-phosphate and phosphoenolpyruvate: step 7/7. Functionally, catalyzes the anti-1,4-elimination of the C-3 phosphate and the C-6 proR hydrogen from 5-enolpyruvylshikimate-3-phosphate (EPSP) to yield chorismate, which is the branch point compound that serves as the starting substrate for the three terminal pathways of aromatic amino acid biosynthesis. This reaction introduces a second double bond into the aromatic ring system. The polypeptide is Chorismate synthase (Synechocystis sp. (strain ATCC 27184 / PCC 6803 / Kazusa)).